The sequence spans 343 residues: Ribosome production factor 1 (343 aa).

Basic and acidic residues-rich tracts occupy residues 1–10 and 82–91; these read MAEKKGPEAK and EREALGDKAP. 2 disordered regions span residues 1-51 and 77-97; these read MAEK…LSEI and KKRKKEREALGDKAPPKPVPK. The Brix domain maps to 136-319; sequence PKILITTSDR…LRSLQKGTFD (184 aa). An RNA-binding region spans residues 297–314; the sequence is VGIQELGPRFTLKLRSLQ.

It is found in the nucleus. Its subcellular location is the nucleolus. May be required for ribosome biogenesis. This Xenopus laevis (African clawed frog) protein is Ribosome production factor 1 (rpf1).